Here is a 211-residue protein sequence, read N- to C-terminus: tRNA (guanine-N(7)-)-methyltransferase (211 aa).

S-adenosyl-L-methionine contacts are provided by Glu37, Asp62, Glu89, and Asp112. Residue Asp112 is part of the active site. Substrate-binding residues include Lys116 and Asp148.

It belongs to the class I-like SAM-binding methyltransferase superfamily. TrmB family.

It carries out the reaction guanosine(46) in tRNA + S-adenosyl-L-methionine = N(7)-methylguanosine(46) in tRNA + S-adenosyl-L-homocysteine. The protein operates within tRNA modification; N(7)-methylguanine-tRNA biosynthesis. Catalyzes the formation of N(7)-methylguanine at position 46 (m7G46) in tRNA. The chain is tRNA (guanine-N(7)-)-methyltransferase from Geobacter metallireducens (strain ATCC 53774 / DSM 7210 / GS-15).